Consider the following 397-residue polypeptide: SET domain-containing protein 4 (397 aa).

The region spanning A29 to G245 is the SET domain. Y244 contributes to the S-adenosyl-L-methionine binding site.

Belongs to the class V-like SAM-binding methyltransferase superfamily. SETD4 family.

The protein localises to the nucleus. The enzyme catalyses L-lysyl(79)-[histone H3] + 3 S-adenosyl-L-methionine = N(6),N(6),N(6)-trimethyl-L-lysyl(79)-[histone H3] + 3 S-adenosyl-L-homocysteine + 3 H(+). It carries out the reaction L-lysyl(20)-[histone H4] + S-adenosyl-L-methionine = N(6)-methyl-L-lysyl(20)-[histone H4] + S-adenosyl-L-homocysteine + H(+). It catalyses the reaction N(6)-methyl-L-lysyl(20)-[histone H4] + S-adenosyl-L-methionine = N(6),N(6)-dimethyl-L-lysyl(20)-[histone H4] + S-adenosyl-L-homocysteine + H(+). The catalysed reaction is N(6),N(6)-dimethyl-L-lysyl(20)-[histone H4] + S-adenosyl-L-methionine = N(6),N(6),N(6)-trimethyl-L-lysyl(20)-[histone H4] + S-adenosyl-L-homocysteine + H(+). Functionally, protein-lysine N-methyltransferase involved in the regulation of cell quiescence by catalyzing the trimethylation of 'Lys-20' of histone H4 and 'Lys-79' of histone H3 (H4K20me3 and H3K79me3, respectively) during diapause formation, a state of obligate dormancy. In Artemia parthenogenetica (Brine shrimp), this protein is SET domain-containing protein 4.